A 106-amino-acid chain; its full sequence is MADFLGMMKQAAQLQSKMQAMQEELGSLEVEGISGGGLVAVRMTAKMEVKGIKIDPSLLKPDEAEILEDLLVTAHGDARRKAEAAMQEKMQAITGKLGLPPGFGFG.

The protein belongs to the YbaB/EbfC family. Homodimer.

It is found in the cytoplasm. The protein resides in the nucleoid. Functionally, binds to DNA and alters its conformation. May be involved in regulation of gene expression, nucleoid organization and DNA protection. This Bradyrhizobium sp. (strain BTAi1 / ATCC BAA-1182) protein is Nucleoid-associated protein BBta_7345.